The following is a 37-amino-acid chain: Kappa-actitoxin-Bgr1a (37 aa).

Residues 2-37 (CRDWFKETACRHAKSLGNCRTSQKYRANCAKTCELC) form the ShKT domain. 3 cysteine pairs are disulfide-bonded: cysteine 2–cysteine 37, cysteine 11–cysteine 30, and cysteine 20–cysteine 34. The crucial for binding to potassium channels stretch occupies residues 25 to 26 (KY).

Belongs to the sea anemone type 1 potassium channel toxin family. Type 1b subfamily.

The protein localises to the secreted. The protein resides in the nematocyst. In terms of biological role, inhibits voltage-dependent potassium channels of the Kv1 family (Kv1.1/KCNA1 (Kd=6 nM), Kv1.2/KCNA2 (Kd=15 nM), Kv1.3/KCNA3 (Kd=10-39 nM), Kv1.6/KCNA6, and KCa3.1/KCNN4 (Kd=172 nM)). This chain is Kappa-actitoxin-Bgr1a, found in Bunodosoma granuliferum (Red warty sea anemone).